The primary structure comprises 449 residues: GTPase Der (449 aa).

EngA-type G domains follow at residues 4-174 (PIVA…PPKT) and 183-358 (LRVA…AQRQ). GTP-binding positions include 10-17 (GRPNVGKS), 57-61 (DTAGL), 126-129 (NKCD), 189-196 (GRPNVGKS), 236-240 (DTAGI), and 301-304 (NKWD). The region spanning 359-444 (KRIPTSELNN…PIVIVFRSRE (86 aa)) is the KH-like domain.

Belongs to the TRAFAC class TrmE-Era-EngA-EngB-Septin-like GTPase superfamily. EngA (Der) GTPase family. Associates with the 50S ribosomal subunit.

In terms of biological role, GTPase that plays an essential role in the late steps of ribosome biogenesis. In Chloroflexus aggregans (strain MD-66 / DSM 9485), this protein is GTPase Der.